We begin with the raw amino-acid sequence, 367 residues long: C-X-C chemokine receptor type 3 (367 aa).

The Extracellular segment spans residues 1 to 56 (MYLEVSERQVLDASDIAFLLENSTSPYDYGENESDFSDSPPCPQDFSLNFDRTFLP). Asn22 is a glycosylation site (N-linked (GlcNAc...) asparagine). Tyr27 and Tyr29 each carry sulfotyrosine. Asn32 is a glycosylation site (N-linked (GlcNAc...) asparagine). Residues 57 to 77 (VLYSLLFLLGLLGNGAVAAVL) traverse the membrane as a helical segment. Over 78–89 (LSQRTALSSTDT) the chain is Cytoplasmic. The chain crosses the membrane as a helical span at residues 90 to 110 (FLLHLAVADVLLVLTLPLWAV). Topologically, residues 111–125 (DAAAQWVFGSGLCKV) are extracellular. An intrachain disulfide couples Cys123 to Cys202. The helical transmembrane segment at 126 to 146 (AGALFNINFYAGAFLLACISF) threads the bilayer. The Cytoplasmic portion of the chain corresponds to 147 to 168 (DRYLSIVHATQIYRRDPWVRVA). A helical membrane pass occupies residues 169–189 (LTCIVVWGLCVLFALPDFIFL). At 190-222 (SASHDQRLNATHCQYNFPQVGRTALRVLQLVAG) the chain is on the extracellular side. Asn198 carries an N-linked (GlcNAc...) asparagine glycan. The chain crosses the membrane as a helical span at residues 223-243 (FLMPLLVMAYCYAHILAVLLV). At 244–255 (SRGQRRFRAMRL) the chain is on the cytoplasmic side. Residues 256–276 (VVVVVVAFAVCWTPYHLVVLV) traverse the membrane as a helical segment. Over 277-300 (DILMDVGVLARNCGRESHVDVAKS) the chain is Extracellular. The chain crosses the membrane as a helical span at residues 301-321 (VTSGMGYMHCCLNPLLYAFVG). At 322–367 (VKFKEQMWMLLMRLGRSDQRGPQRQPSSSRRESSWSETTEASYLGL) the chain is on the cytoplasmic side. Positions 339 to 367 (DQRGPQRQPSSSRRESSWSETTEASYLGL) are disordered.

This sequence belongs to the G-protein coupled receptor 1 family. In terms of assembly, homomer. Forms heteromers with ACKR4. Interacts with PF4/CXCL4. Sulfation on Tyr-27 and Tyr-29 is essential for CXCL10 binding. In terms of processing, N-glycosylated.

It is found in the cell membrane. In terms of biological role, receptor for the C-X-C chemokine CXCL9, CXCL10 and CXCL11 and mediates the proliferation, survival and angiogenic activity of mesangial cells through a heterotrimeric G-protein signaling pathway. Probably promotes cell chemotaxis response. Binds to CCL21. Upon activation by PF4, induces activated T-lymphocytes migration mediated via downstream Ras/extracellular signal-regulated kinase (ERK) signaling. This chain is C-X-C chemokine receptor type 3 (Cxcr3), found in Rattus norvegicus (Rat).